Consider the following 563-residue polypeptide: RUN and FYVE domain-containing protein 4 (563 aa).

Residues 33-166 (TETSAELHRL…VAFNLDLQRP (134 aa)) enclose the RUN domain. 2 disordered regions span residues 176–327 (SESR…TTEG) and 375–397 (KKSS…MQED). 2 stretches are compositionally biased toward basic and acidic residues: residues 196–205 (GFPEEVRCSR) and 263–284 (ETER…RKFL). The segment covering 285 to 295 (ENSTASIQQQR) has biased composition (polar residues). Positions 297–312 (RAKDVKMQLTGRKVEG) are enriched in basic and acidic residues. Positions 385-396 (EWTGVTSGTMQE) are enriched in polar residues. Residues 421–462 (QAQCQEQLRAQEAELQALQEQLSRCQKERALLQVKLEQKQQE) adopt a coiled-coil conformation. The FYVE-type zinc-finger motif lies at 428-558 (LRAQEAELQA…RCCPTCAQQE (131 aa)). Residues cysteine 513, cysteine 516, cysteine 529, cysteine 532, cysteine 537, cysteine 540, cysteine 551, and cysteine 554 each coordinate Zn(2+).

As to quaternary structure, forms homodimers (via coiled coil domain). Forms a ternary complex with RAB7A and LAMP2; the interaction with RAB7A is mediated by RUFY4 (via RUN and coiled coil domains). Interacts with GTP-, but not GDP-bound ARL8A and ARL8B. Interacts with dynactin/DCTN1 and the dynein intermediate chain DYNC1I1/2. Expressed in dendritic cells.

Its subcellular location is the cytoplasmic vesicle. It is found in the autophagosome. The protein localises to the lysosome. Its function is as follows. ARL8 effector that promotes the coupling of endolysosomes to dynein-dynactin for retrograde transport along microtubules. Acts by binding both GTP-bound ARL8 and dynein-dynactin. In nonneuronal cells, promotes concentration of endolysosomes in the juxtanuclear area. In hippocampal neurons, drives retrograde transport of endolysosomes from the axon to the soma. Positive regulator of macroautophagy in dendritic cells. Increases autophagic flux, probably by stimulating both autophagosome formation and facilitating tethering with lysosomes. Binds to phosphatidylinositol 3-phosphate (PtdIns3P) through its FYVE-type zinc finger. Positive regulator of osteosclast bone-resorbing activity, possibly by promoting late endosome-lysosome fusion by acting as an adapter protein between RAB7A on late endosomes and LAMP2 on primary lysosomes. The protein is RUN and FYVE domain-containing protein 4 (Rufy4) of Mus musculus (Mouse).